Reading from the N-terminus, the 960-residue chain is Gamma-aminobutyric acid type B receptor subunit 1 (960 aa).

Residues 1-19 (MLLLLLVPLFLRPLGAGGA) form the signal peptide. Over 20 to 590 (QTPNATSEGC…KTFRFLSQKL (571 aa)) the chain is Extracellular. N-linked (GlcNAc...) asparagine glycosylation is found at Asn23 and Asn83. Sushi domains follow at residues 29-95 (CQII…PSRC) and 97-158 (RICS…HCQV). Intrachain disulfides connect Cys99-Cys144, Cys130-Cys156, and Cys219-Cys245. The 4-aminobutanoate site is built by Ser246, Ser269, His286, and Tyr366. A disulfide bond links Cys375 and Cys409. Residues Asn408 and Asn439 are each glycosylated (N-linked (GlcNAc...) asparagine). A 4-aminobutanoate-binding site is contributed by Glu465. 3 N-linked (GlcNAc...) asparagine glycosylation sites follow: Asn481, Asn501, and Asn513. Residues 591–611 (FISVSVLSSLGIVLAVVCLSF) traverse the membrane as a helical segment. The Cytoplasmic segment spans residues 612 to 630 (NIYNSHVRYIQNSQPNLNN). The chain crosses the membrane as a helical span at residues 631 to 651 (LTAVGCSLALAAVFPLGLDGY). Topologically, residues 652–666 (HIGRSQFPFVCQARL) are extracellular. Residues 667-687 (WLLGLGFSLGYGSMFTKIWWV) traverse the membrane as a helical segment. The Cytoplasmic portion of the chain corresponds to 688–709 (HTVFTKKEEKKEWRKTLEPWKL). Residues 710–730 (YATVGLLVGMDVLTLAIWQIV) form a helical membrane-spanning segment. Residues 731–767 (DPLHRTIETFAKEEPKEDIDVSILPQLEHCSSKKMNT) are Extracellular-facing. A helical transmembrane segment spans residues 768 to 788 (WLGIFYGYKGLLLLLGIFLAY). At 789–803 (ETKSVSTEKINDHRA) the chain is on the cytoplasmic side. The chain crosses the membrane as a helical span at residues 804 to 824 (VGMAIYNVAVLCLITAPVTMI). Residues 825 to 832 (LSSQQDAA) lie on the Extracellular side of the membrane. The helical transmembrane segment at 833 to 853 (FAFASLAIVFSSYITLVVLFV) threads the bilayer. Residues 854–960 (PKMRRLITRG…DGSRVHLLYK (107 aa)) are Cytoplasmic-facing. Residues 866-879 (QSETQDTMKTGSST) are compositionally biased toward polar residues. 2 disordered regions span residues 866–891 (QSET…RLLE) and 908–960 (VSEL…LLYK). The stretch at 870–924 (QDTMKTGSSTNNNEEEKSRLLEKENRELEKIIAEKEERVSELRHQLQSRQQLRSR) forms a coiled coil. Thr872 is modified (phosphothreonine). The tract at residues 887–915 (SRLLEKENRELEKIIAEKEERVSELRHQL) is interaction with ATF4. Thr929 bears the Phosphothreonine mark.

It belongs to the G-protein coupled receptor 3 family. GABA-B receptor subfamily. Heterodimer of GABBR1 and GABBR2. Homodimers may form, but are inactive. Interacts (via C-terminus) with ATF4 (via leucine zipper domain). Interacts with JAKMIP1. As to expression, ubiquitously expressed in tissues including the forebrain, cerebellum, eye, atrium, ventricle, lung, stomach, small intestine, colon, liver, spleen, kidney, urinary bladder and skeletal muscle. Expressed at low levels in testis, and more highly in brain regions. Expression is high the brain regions including cerebral cortical layers, with higher expression in VIb than in the II-V layers, pyramidal CA1-CA3 cell layers and granular cell layers of the hippocampus, granular cell layers of the dentate gyrus, including the caudate, putamen, nucleus accumbens and olfactory tubercle, the granular layer cell layers of the medial habenula, in the cerebellum, predominantly in Purkinje cells, and in the granule cell layer. Also expressed in areas of the brain including the medial geniculate nucleus, substantia nigra, pars compacta, the ventral tegmental area, and in several thalamic, amygdaloid and hypothalamic nuclei, such as the arcuate nucleus of the hypothalamus and mammilary bodies of the hypothalamus. Expressed in the amacrine cell of the retina. In terms of tissue distribution, expressed in the brain, spinal cord, stomach, testis, adrenal gland, pituitary, spleen and prostate. Expressed in the brain, spinal cord, stomach, testis, kidney and liver. As to expression, ubiquitously expressed. In terms of tissue distribution, expressed in the forebrain, cerebellum, eye, kidney and urinary bladder. Ubiquitously expressed with high expression in the pyramidal CA1-CA3 cell layers of the hippocampus, the granule cell layers of the dentate gyrus and olfactory tubercle, the whole cortex, and Purkinje cells of the cerebellum. Moderate expression in the granule cell layer of the cerebellum.

It is found in the cell membrane. Its subcellular location is the postsynaptic cell membrane. It localises to the cell projection. The protein resides in the dendrite. The protein localises to the perikaryon. Component of a heterodimeric G-protein coupled receptor for GABA, formed by GABBR1 and GABBR2. Within the heterodimeric GABA receptor, only GABBR1 seems to bind agonists, while GABBR2 mediates coupling to G proteins. Ligand binding causes a conformation change that triggers signaling via guanine nucleotide-binding proteins (G proteins) and modulates the activity of down-stream effectors, such as adenylate cyclase. Signaling inhibits adenylate cyclase, stimulates phospholipase A2, activates potassium channels, inactivates voltage-dependent calcium-channels and modulates inositol phospholipid hydrolysis. Calcium is required for high affinity binding to GABA. Plays a critical role in the fine-tuning of inhibitory synaptic transmission. Pre-synaptic GABA receptor inhibits neurotransmitter release by down-regulating high-voltage activated calcium channels, whereas postsynaptic GABA receptor decreases neuronal excitability by activating a prominent inwardly rectifying potassium (Kir) conductance that underlies the late inhibitory postsynaptic potentials. Not only implicated in synaptic inhibition but also in hippocampal long-term potentiation, slow wave sleep, muscle relaxation and antinociception. This Rattus norvegicus (Rat) protein is Gamma-aminobutyric acid type B receptor subunit 1 (Gabbr1).